Here is a 432-residue protein sequence, read N- to C-terminus: Adenylosuccinate synthetase (432 aa).

GTP is bound by residues Gly-12–Lys-18 and Gly-40–Thr-42. Asp-13 (proton acceptor) is an active-site residue. 2 residues coordinate Mg(2+): Asp-13 and Gly-40. Residues Asp-13–Lys-16, Asn-38–His-41, Thr-126, Arg-140, Gln-219, Thr-234, and Arg-300 contribute to the IMP site. His-41 functions as the Proton donor in the catalytic mechanism. Substrate is bound at residue Ser-296–Arg-302. Residues Arg-302, Lys-328–Asp-330, and Ser-410–Gly-412 each bind GTP.

The protein belongs to the adenylosuccinate synthetase family. In terms of assembly, homodimer. Mg(2+) is required as a cofactor.

It is found in the cytoplasm. It catalyses the reaction IMP + L-aspartate + GTP = N(6)-(1,2-dicarboxyethyl)-AMP + GDP + phosphate + 2 H(+). It functions in the pathway purine metabolism; AMP biosynthesis via de novo pathway; AMP from IMP: step 1/2. Its function is as follows. Plays an important role in the de novo pathway of purine nucleotide biosynthesis. Catalyzes the first committed step in the biosynthesis of AMP from IMP. This chain is Adenylosuccinate synthetase, found in Aquifex aeolicus (strain VF5).